Here is a 579-residue protein sequence, read N- to C-terminus: Putative laccase-9 (579 aa).

The first 27 residues, 1 to 27 (MGTAKLPALLWLLAGVVLALAVNPAHG), serve as a signal peptide directing secretion. Plastocyanin-like domains follow at residues 36–152 (FITE…PKRG) and 162–319 (KEIP…YTDS). N-linked (GlcNAc...) asparagine glycans are attached at residues Asn41 and Asn82. 2 residues coordinate Cu cation: His86 and His88. An N-linked (GlcNAc...) asparagine glycan is attached at Asn114. Residues His131 and His133 each contribute to the Cu cation site. N-linked (GlcNAc...) asparagine glycans are attached at residues Asn307, Asn405, and Asn446. The Plastocyanin-like 3 domain maps to 436-563 (PTAFVDPPVN…DTVFIVKDGK (128 aa)). The Cu cation site is built by His480, His483, and His485. N-linked (GlcNAc...) asparagine glycosylation is present at Asn496. Residues His542, Cys543, His544, His548, and Met553 each coordinate Cu cation.

Belongs to the multicopper oxidase family. It depends on Cu cation as a cofactor.

Its subcellular location is the secreted. It is found in the extracellular space. It localises to the apoplast. It catalyses the reaction 4 hydroquinone + O2 = 4 benzosemiquinone + 2 H2O. Its function is as follows. Lignin degradation and detoxification of lignin-derived products. The sequence is that of Putative laccase-9 (LAC9) from Oryza sativa subsp. japonica (Rice).